The following is a 165-amino-acid chain: Small ribosomal subunit protein bS16 (165 aa).

It belongs to the bacterial ribosomal protein bS16 family.

This chain is Small ribosomal subunit protein bS16, found in Azobacteroides pseudotrichonymphae genomovar. CFP2.